The following is a 106-amino-acid chain: uncharacterized protein (106 aa).

This is an uncharacterized protein from Invertebrate iridescent virus 3 (IIV-3).